Reading from the N-terminus, the 347-residue chain is Merozoite surface protein P12 (347 aa).

A signal peptide spans 1 to 25 (MIKLSKKYCLGISFVLYILLSVCEG). 2 6-Cys domains span residues 27–172 (KNLT…IPSL) and 175–305 (KVKG…ISSS). The N-linked (GlcNAc...) asparagine glycan is linked to N28. Disulfide bonds link C31–C53, C67–C138, and C81–C136. N-linked (GlcNAc...) asparagine glycans are attached at residues N147, N200, N228, N242, N265, and N322. 3 cysteine pairs are disulfide-bonded: C179–C211, C225–C286, and C236–C284. The GPI-anchor amidated asparagine moiety is linked to residue N322. Residues 323–347 (SSFLTLSSYCAFITFIITSFLSFIL) constitute a propeptide, removed in mature form.

Heterodimer; heterodimerizes with PF41. May form an antiparallel heterodimer with PF41. In terms of processing, processed into a soluble form.

Its subcellular location is the cell surface. It localises to the cell membrane. This Plasmodium falciparum (isolate 3D7) protein is Merozoite surface protein P12 (PF12).